The following is a 306-amino-acid chain: Non-specific ribonucleoside hydrolase RihC (306 aa).

Histidine 235 is a catalytic residue.

It belongs to the IUNH family. RihC subfamily.

Hydrolyzes both purine and pyrimidine ribonucleosides with a broad-substrate specificity. In Salmonella paratyphi B (strain ATCC BAA-1250 / SPB7), this protein is Non-specific ribonucleoside hydrolase RihC.